The sequence spans 355 residues: Glutamyl aminopeptidase (355 aa).

Residues histidine 65 and aspartate 181 each contribute to the a divalent metal cation site. Catalysis depends on glutamate 213, which acts as the Proton acceptor. Residues glutamate 214, aspartate 236, and histidine 319 each contribute to the a divalent metal cation site.

This sequence belongs to the peptidase M42 family. The cofactor is a divalent metal cation.

It carries out the reaction Release of N-terminal glutamate (and to a lesser extent aspartate) from a peptide.. The polypeptide is Glutamyl aminopeptidase (pepA) (Lactococcus lactis subsp. cremoris (strain MG1363)).